Here is a 508-residue protein sequence, read N- to C-terminus: Pentatricopeptide repeat-containing protein At5g48730, chloroplastic (508 aa).

The span at 1–10 (MVSLSTSTSH) shows a compositional bias: polar residues. The segment at 1–22 (MVSLSTSTSHAPPLPTNRRTAE) is disordered. Residues 1–28 (MVSLSTSTSHAPPLPTNRRTAERTFTVR) constitute a chloroplast transit peptide. PPR repeat units follow at residues 149–183 (NVGIYVKLIVMLGKCKQPEKAHELFQEMINEGCVV), 184–214 (NHEVYTALVSAYSRSGRFDAAFTLLERMKSS), 220–254 (DVHTYSILIKSFLQVFAFDKVQDLLSDMRRQGIRP), 255–290 (NTITYNTLIDAYGKAKMFVEMESTLIQMLGEDDCKP), 291–325 (DSWTMNSTLRAFGGNGQIEMMENCYEKFQSSGIEP), 326–360 (NIRTFNILLDSYGKSGNYKKMSAVMEYMQKYHYSW), 361–395 (TIVTYNVVIDAFGRAGDLKQMEYLFRLMQSERIFP), 396–430 (SCVTLCSLVRAYGRASKADKIGGVLRFIENSDIRL), 431–465 (DLVFFNCLVDAYGRMEKFAEMKGVLELMEKKGFKP), and 466–500 (DKITYRTMVKAYRISGMTTHVKELHGVVESVGEAQ).

The protein belongs to the PPR family. P subfamily.

It localises to the plastid. Its subcellular location is the chloroplast. The protein is Pentatricopeptide repeat-containing protein At5g48730, chloroplastic of Arabidopsis thaliana (Mouse-ear cress).